A 465-amino-acid chain; its full sequence is FAD-dependent monooxygenase penM (465 aa).

A helical membrane pass occupies residues 5–25 (QFHVIIVGGSIAGLTLAHCLH). Positions 35, 49, 108, 299, and 312 each coordinate FAD. A helical membrane pass occupies residues 435 to 455 (VLVLLLSALTWSCLGNMNIIM).

It belongs to the paxM FAD-dependent monooxygenase family. FAD serves as cofactor.

The protein localises to the membrane. It participates in secondary metabolite biosynthesis. Its function is as follows. FAD-dependent monooxygenase; part of the gene cluster that mediates the biosynthesis of the indole diterpenes penitrems. The geranylgeranyl diphosphate (GGPP) synthase penG catalyzes the first step in penitrem biosynthesis via conversion of farnesyl pyrophosphate and isopentyl pyrophosphate into geranylgeranyl pyrophosphate (GGPP). Condensation of indole-3-glycerol phosphate with GGPP by the prenyl transferase penC then forms 3-geranylgeranylindole (3-GGI). Epoxidation by the FAD-dependent monooxygenase penM leads to a epoxidized-GGI that is substrate of the terpene cyclase penB for cyclization to yield paspaline. Paspaline is subsequently converted to 13-desoxypaxilline by the cytochrome P450 monooxygenase penP, the latter being then converted to paxilline by the cytochrome P450 monooxygenase penQ. Paxilline is converted to beta-paxitriol via C-10 ketoreduction by the short-chain dehydrogenase PC-15 which can be monoprenylated at the C-20 by the indole diterpene prenyltransferase penD. A two-step elimination (acetylation and elimination) process performed by the O-acetyltransferase PC-16 and the P.simplicissimum ptmI-ortholog not yet identified in P.crustosum, leads to the production of the prenylated form of penijanthine. The FAD-linked oxidoreductase ptmO then converts the prenylated form of penijanthine into PC-M5 which is in turn transformed into PC-M4 by the aromatic dimethylallyltransferase PC-22. A series of oxidation steps involving 4 cytochrome P450 monooxygenases (PC-21, PC-05, PC-23, PC-20) and a FAD-dependent monooxygenase (PC-14) are required for the transformation of PC-M4 to penitrems A and E. Synthesis of these final products is proposed to proceed via penitrems D and C (PC-21, PC-05, PC-14) and penitrems B and F (PC-21, PC-05, PC-14, PC-23). In Penicillium crustosum (Blue mold fungus), this protein is FAD-dependent monooxygenase penM.